The chain runs to 356 residues: Cobalt-precorrin-5B C(1)-methyltransferase (356 aa).

It belongs to the CbiD family.

The enzyme catalyses Co-precorrin-5B + S-adenosyl-L-methionine = Co-precorrin-6A + S-adenosyl-L-homocysteine. The protein operates within cofactor biosynthesis; adenosylcobalamin biosynthesis; cob(II)yrinate a,c-diamide from sirohydrochlorin (anaerobic route): step 6/10. Its function is as follows. Catalyzes the methylation of C-1 in cobalt-precorrin-5B to form cobalt-precorrin-6A. In Geobacter sp. (strain M21), this protein is Cobalt-precorrin-5B C(1)-methyltransferase.